The primary structure comprises 331 residues: MEKIKILLDTMGYENDLEHVIKAAKDFYYQHEDDLEIILVGNEQLIKPLLDNDWRLFPIVHTEVSIEQNDTILSARKKQNSSMHLALRYLKDKQADGMLTAGNSAVFVYNAYATIGLLEHIKKPAFMPFVPTIDGGVTNLLDVGASIDVDGTDLFNFAIMANTIAKMRTPNPRVGVLNIGTEDHKGLPYHQEANELLKTSNLNYVGFVEPKTILEREVDVLVADGFSGNIALKTMEGVGKTISNFLKNEYKKPKNLFAALLSKPIFKKIKKAFDYKEHAGAFVLGLDGILVKTHGSADYQQFMSALKILYETIKADVLNEIKKDLNNYYGQ.

Belongs to the PlsX family. Homodimer. Probably interacts with PlsY.

It localises to the cytoplasm. The enzyme catalyses a fatty acyl-[ACP] + phosphate = an acyl phosphate + holo-[ACP]. Its pathway is lipid metabolism; phospholipid metabolism. In terms of biological role, catalyzes the reversible formation of acyl-phosphate (acyl-PO(4)) from acyl-[acyl-carrier-protein] (acyl-ACP). This enzyme utilizes acyl-ACP as fatty acyl donor, but not acyl-CoA. The chain is Phosphate acyltransferase from Ureaplasma parvum serovar 3 (strain ATCC 27815 / 27 / NCTC 11736).